We begin with the raw amino-acid sequence, 406 residues long: Cysteine desulfurase (406 aa).

Lys-226 carries the N6-(pyridoxal phosphate)lysine modification. Cys-364 serves as the catalytic Cysteine persulfide intermediate.

It belongs to the class-V pyridoxal-phosphate-dependent aminotransferase family. Csd subfamily. Homodimer. Interacts with SufE and the SufBCD complex composed of SufB, SufC and SufD. The interaction with SufE is required to mediate the direct transfer of the sulfur atom from the S-sulfanylcysteine. The cofactor is pyridoxal 5'-phosphate.

It is found in the cytoplasm. The catalysed reaction is (sulfur carrier)-H + L-cysteine = (sulfur carrier)-SH + L-alanine. It carries out the reaction L-selenocysteine + AH2 = hydrogenselenide + L-alanine + A + H(+). It functions in the pathway cofactor biosynthesis; iron-sulfur cluster biosynthesis. Functionally, cysteine desulfurases mobilize the sulfur from L-cysteine to yield L-alanine, an essential step in sulfur metabolism for biosynthesis of a variety of sulfur-containing biomolecules. Component of the suf operon, which is activated and required under specific conditions such as oxidative stress and iron limitation. Acts as a potent selenocysteine lyase in vitro, that mobilizes selenium from L-selenocysteine. Selenocysteine lyase activity is however unsure in vivo. In Yersinia pseudotuberculosis serotype O:1b (strain IP 31758), this protein is Cysteine desulfurase.